The chain runs to 281 residues: Ribosomal protein L11 methyltransferase (281 aa).

S-adenosyl-L-methionine contacts are provided by Thr-133, Gly-154, Asp-175, and Asn-216.

This sequence belongs to the methyltransferase superfamily. PrmA family.

The protein localises to the cytoplasm. The enzyme catalyses L-lysyl-[protein] + 3 S-adenosyl-L-methionine = N(6),N(6),N(6)-trimethyl-L-lysyl-[protein] + 3 S-adenosyl-L-homocysteine + 3 H(+). In terms of biological role, methylates ribosomal protein L11. This chain is Ribosomal protein L11 methyltransferase, found in Campylobacter jejuni (strain RM1221).